We begin with the raw amino-acid sequence, 317 residues long: Large ribosomal subunit protein uL10z (317 aa).

This sequence belongs to the universal ribosomal protein uL10 family. P0 forms a pentameric complex by interaction with dimers of P1 and P2. In terms of processing, phosphorylated.

In terms of biological role, ribosomal protein P0 is the functional equivalent of E.coli protein L10. This is Large ribosomal subunit protein uL10z (RPP0A) from Arabidopsis thaliana (Mouse-ear cress).